The sequence spans 335 residues: Holliday junction branch migration complex subunit RuvB (335 aa).

The tract at residues 4–184 is large ATPase domain (RuvB-L); that stretch reads ADRLIDATEK…FGIVQRLEFY (181 aa). Residues Ile23, Arg24, Gly65, Lys68, Thr69, Thr70, 131–133, Arg174, Tyr184, and Arg221 each bind ATP; that span reads EDY. Mg(2+) is bound at residue Thr69. The tract at residues 185–255 is small ATPAse domain (RuvB-S); it reads SVEDLSYIVG…VAELALNMID (71 aa). The segment at 258–335 is head domain (RuvB-H); sequence KSGFDYMDRK…HHFGLLPKQD (78 aa). Positions 313 and 318 each coordinate DNA.

Belongs to the RuvB family. As to quaternary structure, homohexamer. Forms an RuvA(8)-RuvB(12)-Holliday junction (HJ) complex. HJ DNA is sandwiched between 2 RuvA tetramers; dsDNA enters through RuvA and exits via RuvB. An RuvB hexamer assembles on each DNA strand where it exits the tetramer. Each RuvB hexamer is contacted by two RuvA subunits (via domain III) on 2 adjacent RuvB subunits; this complex drives branch migration. In the full resolvosome a probable DNA-RuvA(4)-RuvB(12)-RuvC(2) complex forms which resolves the HJ.

The protein localises to the cytoplasm. It catalyses the reaction ATP + H2O = ADP + phosphate + H(+). Its function is as follows. The RuvA-RuvB-RuvC complex processes Holliday junction (HJ) DNA during genetic recombination and DNA repair, while the RuvA-RuvB complex plays an important role in the rescue of blocked DNA replication forks via replication fork reversal (RFR). RuvA specifically binds to HJ cruciform DNA, conferring on it an open structure. The RuvB hexamer acts as an ATP-dependent pump, pulling dsDNA into and through the RuvAB complex. RuvB forms 2 homohexamers on either side of HJ DNA bound by 1 or 2 RuvA tetramers; 4 subunits per hexamer contact DNA at a time. Coordinated motions by a converter formed by DNA-disengaged RuvB subunits stimulates ATP hydrolysis and nucleotide exchange. Immobilization of the converter enables RuvB to convert the ATP-contained energy into a lever motion, pulling 2 nucleotides of DNA out of the RuvA tetramer per ATP hydrolyzed, thus driving DNA branch migration. The RuvB motors rotate together with the DNA substrate, which together with the progressing nucleotide cycle form the mechanistic basis for DNA recombination by continuous HJ branch migration. Branch migration allows RuvC to scan DNA until it finds its consensus sequence, where it cleaves and resolves cruciform DNA. The chain is Holliday junction branch migration complex subunit RuvB from Pseudoalteromonas translucida (strain TAC 125).